A 473-amino-acid chain; its full sequence is Glutamate--tRNA ligase 2 (473 aa).

The short motif at 11–21 is the 'HIGH' region element; that stretch reads PSPTGYLHIGG. Over residues 113–133 the composition is skewed to basic and acidic residues; the sequence is KARAEGRPPRYDGRWRDRDPS. The segment at 113 to 136 is disordered; the sequence is KARAEGRPPRYDGRWRDRDPSEAP. Residues 240–244 carry the 'KMSKS' region motif; it reads KLSKR. ATP is bound at residue Lys-243.

It belongs to the class-I aminoacyl-tRNA synthetase family. Glutamate--tRNA ligase type 1 subfamily. As to quaternary structure, monomer.

It localises to the cytoplasm. It carries out the reaction tRNA(Glu) + L-glutamate + ATP = L-glutamyl-tRNA(Glu) + AMP + diphosphate. Functionally, catalyzes the attachment of glutamate to tRNA(Glu) in a two-step reaction: glutamate is first activated by ATP to form Glu-AMP and then transferred to the acceptor end of tRNA(Glu). This is Glutamate--tRNA ligase 2 from Brucella canis (strain ATCC 23365 / NCTC 10854 / RM-666).